We begin with the raw amino-acid sequence, 236 residues long: Demethylmenaquinone methyltransferase (236 aa).

Residues Thr62, Asp80, 107 to 108, and Ser124 each bind S-adenosyl-L-methionine; that span reads DA.

Belongs to the class I-like SAM-binding methyltransferase superfamily. MenG/UbiE family.

The enzyme catalyses a 2-demethylmenaquinol + S-adenosyl-L-methionine = a menaquinol + S-adenosyl-L-homocysteine + H(+). It participates in quinol/quinone metabolism; menaquinone biosynthesis; menaquinol from 1,4-dihydroxy-2-naphthoate: step 2/2. Functionally, methyltransferase required for the conversion of demethylmenaquinol (DMKH2) to menaquinol (MKH2). This is Demethylmenaquinone methyltransferase from Thermobifida fusca (strain YX).